A 277-amino-acid polypeptide reads, in one-letter code: Orotidine 5'-phosphate decarboxylase (277 aa).

Substrate-binding positions include Asp-40, 62–64 (KTH), 93–102 (DRKFIDIGNT), Tyr-229, and Arg-247. The active-site Proton donor is Lys-95.

Belongs to the OMP decarboxylase family.

The enzyme catalyses orotidine 5'-phosphate + H(+) = UMP + CO2. The protein operates within pyrimidine metabolism; UMP biosynthesis via de novo pathway; UMP from orotate: step 2/2. This Aspergillus oryzae (strain ATCC 42149 / RIB 40) (Yellow koji mold) protein is Orotidine 5'-phosphate decarboxylase (pyrG).